Reading from the N-terminus, the 137-residue chain is Large ribosomal subunit protein uL16 (137 aa).

It belongs to the universal ribosomal protein uL16 family. Part of the 50S ribosomal subunit.

Binds 23S rRNA and is also seen to make contacts with the A and possibly P site tRNAs. In Rhizobium etli (strain CIAT 652), this protein is Large ribosomal subunit protein uL16.